Consider the following 516-residue polypeptide: Extracellular endo-inulinase inu2 (516 aa).

The signal sequence occupies residues 1 to 23 (MLNPKVAYMVWMTCLGLTLPSQA). Substrate is bound by residues 41-43 (MNE) and asparagine 61. Glutamate 43 is a catalytic residue. N-linked (GlcNAc...) asparagine glycans are attached at residues asparagine 108 and asparagine 109. Residue aspartate 176 coordinates substrate. A glycan (N-linked (GlcNAc...) asparagine) is linked at asparagine 210. Asparagine 320 provides a ligand contact to substrate. Asparagine 372 is a glycosylation site (N-linked (GlcNAc...) asparagine).

Belongs to the glycosyl hydrolase 32 family.

It is found in the secreted. The catalysed reaction is Endohydrolysis of (2-&gt;1)-beta-D-fructosidic linkages in inulin.. In terms of biological role, endo-inulinase involved in utilization of the plant storage polymer inulin, consisting of fructooligosaccharides with a degree of polymerization (DP) value from 2 to 60. The polypeptide is Extracellular endo-inulinase inu2 (inu2) (Aspergillus ficuum).